The chain runs to 255 residues: Type III pantothenate kinase (255 aa).

6–13 (DVGNTHIV) serves as a coordination point for ATP. Residues Tyr-100 and 107 to 110 (GADR) each bind substrate. Asp-109 (proton acceptor) is an active-site residue. Asp-129 lines the K(+) pocket. Thr-132 lines the ATP pocket. Residue Thr-184 coordinates substrate.

This sequence belongs to the type III pantothenate kinase family. Homodimer. It depends on NH4(+) as a cofactor. K(+) serves as cofactor.

It is found in the cytoplasm. The catalysed reaction is (R)-pantothenate + ATP = (R)-4'-phosphopantothenate + ADP + H(+). Its pathway is cofactor biosynthesis; coenzyme A biosynthesis; CoA from (R)-pantothenate: step 1/5. Its function is as follows. Catalyzes the phosphorylation of pantothenate (Pan), the first step in CoA biosynthesis. This is Type III pantothenate kinase from Ruminiclostridium cellulolyticum (strain ATCC 35319 / DSM 5812 / JCM 6584 / H10) (Clostridium cellulolyticum).